We begin with the raw amino-acid sequence, 251 residues long: Pyridoxine 5'-phosphate synthase (251 aa).

Asn7 is a binding site for 3-amino-2-oxopropyl phosphate. 9-10 (DH) contributes to the 1-deoxy-D-xylulose 5-phosphate binding site. Arg18 provides a ligand contact to 3-amino-2-oxopropyl phosphate. His43 acts as the Proton acceptor in catalysis. Arg45 and His50 together coordinate 1-deoxy-D-xylulose 5-phosphate. The Proton acceptor role is filled by Glu70. 1-deoxy-D-xylulose 5-phosphate is bound at residue Thr100. His198 acts as the Proton donor in catalysis. 3-amino-2-oxopropyl phosphate-binding positions include Ala199 and 220 to 221 (GH).

The protein belongs to the PNP synthase family. Homooctamer; tetramer of dimers.

The protein localises to the cytoplasm. It catalyses the reaction 3-amino-2-oxopropyl phosphate + 1-deoxy-D-xylulose 5-phosphate = pyridoxine 5'-phosphate + phosphate + 2 H2O + H(+). Its pathway is cofactor biosynthesis; pyridoxine 5'-phosphate biosynthesis; pyridoxine 5'-phosphate from D-erythrose 4-phosphate: step 5/5. Its function is as follows. Catalyzes the complicated ring closure reaction between the two acyclic compounds 1-deoxy-D-xylulose-5-phosphate (DXP) and 3-amino-2-oxopropyl phosphate (1-amino-acetone-3-phosphate or AAP) to form pyridoxine 5'-phosphate (PNP) and inorganic phosphate. This Aromatoleum aromaticum (strain DSM 19018 / LMG 30748 / EbN1) (Azoarcus sp. (strain EbN1)) protein is Pyridoxine 5'-phosphate synthase.